Here is a 263-residue protein sequence, read N- to C-terminus: Protein MARD1 (263 aa).

Residues 219–263 (SFLSRCFTCKKNLDQKQDIYIYRGEKGFCSSECRYQEMLLDQMET) form an FLZ-type zinc finger.

The protein belongs to the FLZ family. As to quaternary structure, interacts with KIN10 and KIN11 via its FLZ-type zinc finger domain. Interacts with KINB1 and KINB2 via its N-terminal part. Interacts with TZF4, TZF5 and TZF6. Interacts with MPK3 and MPK6.

The protein localises to the cytoplasm. The protein resides in the stress granule. It localises to the P-body. Functionally, may act as an adapter to facilitate the interaction of SnRK1 complex with effector proteins, conferring tissue- and stimulus-type specific differences in the SnRK1 regulation pathway. Involved in seed dormancy control. In Arabidopsis thaliana (Mouse-ear cress), this protein is Protein MARD1.